The sequence spans 242 residues: MIELKNVNKYYGTHHVLKNINLSVKEGEKLVIIGPSGSGKSTTIRCMNGLEEVSSGEVVVNNLVLNHKNKIEICRKYCAMVFQHFNLYPHMTVLQNLTLAPMKLQKKSKKEAEETAFKYLKVVGLLDKANVYPATLSGGQQQRVAIARSLCTKKPYILFDEPTSALDPETIQEVLDVMKEISHQSNTTMVVVTHEMGFAKEVADRIIFMEDGAIVEENIPSEFFSNPKTERARLFLGKILKN.

The ABC transporter domain occupies 2 to 236 (IELKNVNKYY…PKTERARLFL (235 aa)). Residue 34-41 (GPSGSGKS) participates in ATP binding.

This sequence belongs to the ABC transporter superfamily.

The protein resides in the cell inner membrane. In terms of biological role, most probably involved, with PEB1, in a binding-protein-dependent transport system for an amino acid. Probably responsible for energy coupling to the transport system. This chain is Probable ABC transporter ATP-binding protein PEB1C (peb1C), found in Campylobacter jejuni subsp. jejuni serotype O:2 (strain ATCC 700819 / NCTC 11168).